The sequence spans 248 residues: ATP synthase subunit a, chloroplastic (248 aa).

Transmembrane regions (helical) follow at residues Gln38 to Val58, Val96 to Leu116, Ile135 to Ala155, Leu200 to Leu220, and Gly221 to Gly241.

It belongs to the ATPase A chain family. As to quaternary structure, F-type ATPases have 2 components, CF(1) - the catalytic core - and CF(0) - the membrane proton channel. CF(1) has five subunits: alpha(3), beta(3), gamma(1), delta(1), epsilon(1). CF(0) has four main subunits: a, b, b' and c.

It is found in the plastid. The protein localises to the chloroplast thylakoid membrane. Key component of the proton channel; it plays a direct role in the translocation of protons across the membrane. The protein is ATP synthase subunit a, chloroplastic of Cycas taitungensis (Prince sago).